A 591-amino-acid polypeptide reads, in one-letter code: Thiamine transporter thi9 (591 aa).

Positions 1–22 (MPSSQISHQDPELGQTSSGSSS) are enriched in polar residues. Residues 1 to 42 (MPSSQISHQDPELGQTSSGSSSIKEKAEPQLYAGPIDPARRP) are disordered. The next 5 helical transmembrane spans lie at 98–118 (LTFS…AMLV), 342–362 (IFYS…LYLF), 397–417 (VVMN…SVLA), 450–470 (ITVI…SAVA), and 545–565 (YAVV…IVIP). Phosphoserine is present on Ser585.

It belongs to the amino acid-polyamine-organocation (APC) superfamily.

The protein resides in the endoplasmic reticulum membrane. It is found in the cell membrane. Its function is as follows. Thiamine transporter involved in the cellular uptake of thiamine. Pyrithiamine, oxythiamine, amprolium, and the thiazole part of thiamine have been shown to be also substrates of thi9. The polypeptide is Thiamine transporter thi9 (thi9) (Schizosaccharomyces pombe (strain 972 / ATCC 24843) (Fission yeast)).